The chain runs to 534 residues: Probable protein kinase UbiB (534 aa).

The helical transmembrane segment at 23 to 43 (DLLFDLPLPWFLLALRYVLPW) threads the bilayer. The 368-residue stretch at 125–492 (RFDVEPLASA…WKKRKDDWFL (368 aa)) folds into the Protein kinase domain. ATP-binding positions include 131 to 139 (LASASVAQV) and lysine 153. Aspartate 288 (proton acceptor) is an active-site residue. Helical transmembrane passes span 490–510 (WFLRLLGSAHLAGGTILAAGG) and 512–532 (LHELGHWPAGIMVAVGLYLVV).

Belongs to the ABC1 family. UbiB subfamily.

Its subcellular location is the cell inner membrane. The protein operates within cofactor biosynthesis; ubiquinone biosynthesis [regulation]. In terms of biological role, is probably a protein kinase regulator of UbiI activity which is involved in aerobic coenzyme Q (ubiquinone) biosynthesis. The chain is Probable protein kinase UbiB from Pseudomonas fluorescens (strain Pf0-1).